Consider the following 262-residue polypeptide: Putative ankyrin repeat protein FPV243 (262 aa).

One copy of the ANK repeat lies at 25–54 (YGSTPLFEAICNCSCKNVKLFLENNADINE).

The sequence is that of Putative ankyrin repeat protein FPV243 from Vertebrata (FPV).